Here is a 148-residue protein sequence, read N- to C-terminus: 3-dehydroquinate dehydratase (148 aa).

Tyr-22 (proton acceptor) is an active-site residue. Substrate-binding residues include Asn-73, His-79, and Asp-86. Residue His-99 is the Proton donor of the active site. Residues 100 to 101 (LS) and Arg-110 contribute to the substrate site.

Belongs to the type-II 3-dehydroquinase family. As to quaternary structure, homododecamer.

The enzyme catalyses 3-dehydroquinate = 3-dehydroshikimate + H2O. Its pathway is metabolic intermediate biosynthesis; chorismate biosynthesis; chorismate from D-erythrose 4-phosphate and phosphoenolpyruvate: step 3/7. Its function is as follows. Catalyzes a trans-dehydration via an enolate intermediate. The polypeptide is 3-dehydroquinate dehydratase (Prochlorococcus marinus (strain MIT 9211)).